Reading from the N-terminus, the 807-residue chain is Zinc finger protein 594 (807 aa).

The segment at 1–23 is disordered; sequence MKEWKSKMEISEEKKSARAASEK. 8 C2H2-type zinc fingers span residues 127-149, 155-177, 183-205, 211-233, 239-261, 267-289, 295-317, and 323-345; these read YECK…QRIH, YVCN…QRIH, YICH…KQIH, YLCN…HRIH, YECY…QRIH, LKCN…QRLH, and YECH…QRLH. The C2H2-type 9; degenerate zinc finger occupies 348–370; that stretch reads EKIEECEKTFSKDEELREEQRIH. C2H2-type zinc fingers lie at residues 376 to 398, 404 to 426, 432 to 454, 460 to 482, 488 to 510, and 516 to 538; these read YWCN…QVTH, YECK…HRIH, CVCS…HRVH, YECS…QKIH, YQCT…RRIH, and YECK…QSLH. The C2H2-type 16; degenerate zinc finger occupies 543–562; the sequence is LECEKTFSQDEELRGEQKIH. C2H2-type zinc fingers lie at residues 568–590, 596–618, 624–646, 652–674, 680–702, and 708–730; these read YWCN…QVTH, YECK…HRIH, YVCN…HRIH, YECS…QKIH, YQCS…RRLH, and YECK…QRLH. The C2H2-type 23; degenerate zinc-finger motif lies at 733–755; that stretch reads EKLEECEKTFSKDEELRKEQRTH. The segment at 761–783 adopts a C2H2-type 24 zinc-finger fold; that stretch reads YWCNQCSRTFQGSSDLIRHQVTH.

This sequence belongs to the krueppel C2H2-type zinc-finger protein family.

The protein resides in the nucleus. In terms of biological role, may be involved in transcriptional regulation. In Homo sapiens (Human), this protein is Zinc finger protein 594 (ZNF594).